A 477-amino-acid polypeptide reads, in one-letter code: MTLNRKCVVIHNGSHRTVAGFSNVELPQCIIPSSYIKRTDEGGEAEFIFGTYNMIDAAAEKRNGDEVYTLVDSQGLPYNWDALEMQWRYLYDTQLKVSPEELPLVITMPATNGKPDMAILERYYELAFDKLNVPVFQIVIEPLAIALSMGKSSAFVIDIGASGCNVTPIIDGIVVKNAVVRSKFGGDFLDFQVHERLAPLIKEENDMENMADEQKRSTDVWYEASTWIQQFKSTMLQVSEKDLFELERYYKEQADIYAKQQEQLKQMDQQLQYTALTGSPNNPLVQKKNFLFKPLNKTLTLDLKECYQFAEYLFKPQLISDKFSPEDGLGPLMAKSVKKAGASINSMKANTSTNPNGLGTSHINTNVGDNNSTASSSNISPEQVYSLLLTNVIITGSTSLIEGMEQRIIKELSIRFPQYKLTTFANQVMMDRKIQGWLGALTMANLPSWSLGKWYSKEDYETLKRDRKQSQATNATN.

It belongs to the actin family. As to quaternary structure, forms a heterodimer with ARP9. Interacts with NPL6. Component of the two forms of the RSC complex composed of at least either RSC1 or RSC2, and ARP7, ARP9, LDB7, NPL6, RSC3, RSC30, RSC4, RSC58, RSC6, RSC8, RSC9, SFH1, STH1, HTL1 and probably RTT102. The complexes interact with histone and histone variant components of centromeric chromatin. Component of the SWI/SNF global transcription activator complex. The 1.14 MDa SWI/SNF complex is composed of 11 different subunits: one copy each of SWI1, SNF2/SWI2, SNF5, SNF12/SWP73, ARP7/SWP61, ARP9/SWP59; two copies each of SWI3, SNF6, SNF11, SWP82; and three copies of TAF14/SWP29.

It localises to the nucleus. Its function is as follows. Component of the chromatin structure remodeling complex (RSC), which is involved in transcription regulation and nucleosome positioning. RSC is responsible for the transfer of a histone octamer from a nucleosome core particle to naked DNA. The reaction requires ATP and involves an activated RSC-nucleosome intermediate. Remodeling reaction also involves DNA translocation, DNA twist and conformational change. As a reconfigurer of centromeric and flanking nucleosomes, RSC complex is required both for proper kinetochore function in chromosome segregation and, via a PKC1-dependent signaling pathway, for organization of the cellular cytoskeleton. This subunit is involved in transcriptional regulation. Heterodimer of ARP7 and ARP9 functions with HMG box proteins to facilitate proper chromatin architecture. Heterodimer formation is necessary for assembly into RSC complex. Part of the SWI/SNF complex, an ATP-dependent chromatin remodeling complex, is required for the positive and negative regulation of gene expression of a large number of genes. It changes chromatin structure by altering DNA-histone contacts within a nucleosome, leading eventually to a change in nucleosome position, thus facilitating or repressing binding of gene-specific transcription factors. The polypeptide is Actin-related protein 7 (ARP7) (Saccharomyces cerevisiae (strain ATCC 204508 / S288c) (Baker's yeast)).